Reading from the N-terminus, the 182-residue chain is ADP-ribosylation factor 1 (182 aa).

Residue G2 is the site of N-myristoyl glycine attachment. GTP contacts are provided by residues 24-31 (GLDAAGKT), 67-71 (DVGGQ), and 126-129 (NKQD).

Belongs to the small GTPase superfamily. Arf family.

The protein localises to the golgi apparatus. It carries out the reaction GTP + H2O = GDP + phosphate + H(+). Its function is as follows. GTP-binding protein involved in protein trafficking; may modulate vesicle budding and uncoating within the Golgi apparatus. In Dictyostelium discoideum (Social amoeba), this protein is ADP-ribosylation factor 1 (arfA).